We begin with the raw amino-acid sequence, 232 residues long: Probable phospholipid hydroperoxide glutathione peroxidase 6, mitochondrial (232 aa).

The transit peptide at Met1–Gly54 directs the protein to the mitochondrion. The active site involves Cys105.

Belongs to the glutathione peroxidase family. Expressed at a low but detectable level in leaves, stems, and flowers, but at a higher level in siliques and even higher in roots. Predominantly expressed in seeds.

The protein localises to the mitochondrion. It carries out the reaction a hydroperoxy polyunsaturated fatty acid + 2 glutathione = a hydroxy polyunsaturated fatty acid + glutathione disulfide + H2O. Protects cells and enzymes from oxidative damage, by catalyzing the reduction of hydrogen peroxide, lipid peroxides and organic hydroperoxide, by glutathione. This chain is Probable phospholipid hydroperoxide glutathione peroxidase 6, mitochondrial (GPX6), found in Arabidopsis thaliana (Mouse-ear cress).